The chain runs to 339 residues: Isopentenyl-diphosphate delta-isomerase (339 aa).

7–8 lines the substrate pocket; it reads RK. Residues serine 65, 66-68, serine 96, and asparagine 125 contribute to the FMN site; that span reads SMT. 96-98 contacts substrate; that stretch reads SQR. A substrate-binding site is contributed by glutamine 160. Glutamate 161 serves as a coordination point for Mg(2+). Residues lysine 192, threonine 222, and 293 to 294 contribute to the FMN site; that span reads AG.

It belongs to the IPP isomerase type 2 family. In terms of assembly, homooctamer. Dimer of tetramers. FMN is required as a cofactor. It depends on NADPH as a cofactor. Requires Mg(2+) as cofactor.

Its subcellular location is the cytoplasm. It catalyses the reaction isopentenyl diphosphate = dimethylallyl diphosphate. Involved in the biosynthesis of isoprenoids. Catalyzes the 1,3-allylic rearrangement of the homoallylic substrate isopentenyl (IPP) to its allylic isomer, dimethylallyl diphosphate (DMAPP). The chain is Isopentenyl-diphosphate delta-isomerase from Vibrio campbellii (strain ATCC BAA-1116).